The following is a 266-amino-acid chain: ATG8-interacting protein 2 (266 aa).

Positions 14–17 (WEVV) match the AIM (Atg8-family-interacting motif) motif. Residues 191–210 (TNTVWSICIAAAVMGIVILG) traverse the membrane as a helical segment. The AIM (Atg8-family-interacting motif) signature appears at 218–221 (WQIL).

In terms of assembly, interacts with ATG8F.

It localises to the endoplasmic reticulum membrane. Its subcellular location is the membrane. May be involved in salt stress-induced vesicle-to-vacuole trafficking pathway. Through its interaction with ATG8F, may enable delivery of the vesicle bodies to the vacuole by an autophagic pathway. Plays a role in seed germination in response to exogenous abscisic acid (ABA) treatment. The protein is ATG8-interacting protein 2 of Arabidopsis thaliana (Mouse-ear cress).